A 311-amino-acid polypeptide reads, in one-letter code: Homoserine kinase (311 aa).

An ATP-binding site is contributed by 88-98 (PEGLGLGSSGA).

Belongs to the GHMP kinase family. Homoserine kinase subfamily.

The protein localises to the cytoplasm. The enzyme catalyses L-homoserine + ATP = O-phospho-L-homoserine + ADP + H(+). It functions in the pathway amino-acid biosynthesis; L-threonine biosynthesis; L-threonine from L-aspartate: step 4/5. In terms of biological role, catalyzes the ATP-dependent phosphorylation of L-homoserine to L-homoserine phosphate. The protein is Homoserine kinase of Saccharolobus islandicus (strain L.S.2.15 / Lassen #1) (Sulfolobus islandicus).